Here is a 222-residue protein sequence, read N- to C-terminus: Cytochrome b6 (222 aa).

Residues Ile39 to Phe59 form a helical membrane-spanning segment. Cys42 is a binding site for heme c. Positions 93 and 107 each coordinate heme b. Transmembrane regions (helical) follow at residues Ala97–Phe117, Leu123–Tyr143, and Leu193–Ile213. Residues His194 and His209 each coordinate heme b.

Belongs to the cytochrome b family. PetB subfamily. The 4 large subunits of the cytochrome b6-f complex are cytochrome b6, subunit IV (17 kDa polypeptide, PetD), cytochrome f and the Rieske protein, while the 4 small subunits are PetG, PetL, PetM and PetN. The complex functions as a dimer. It depends on heme b as a cofactor. Requires heme c as cofactor.

It localises to the cellular thylakoid membrane. Its function is as follows. Component of the cytochrome b6-f complex, which mediates electron transfer between photosystem II (PSII) and photosystem I (PSI), cyclic electron flow around PSI, and state transitions. The sequence is that of Cytochrome b6 from Rippkaea orientalis (strain PCC 8801 / RF-1) (Cyanothece sp. (strain PCC 8801)).